We begin with the raw amino-acid sequence, 445 residues long: uncharacterized protein (445 aa).

Residues 139 to 160 (TESQKDLEYERKANKTKEENQQ) form a disordered region.

This is an uncharacterized protein from Mycoplasma pneumoniae (strain ATCC 29342 / M129 / Subtype 1) (Mycoplasmoides pneumoniae).